A 273-amino-acid polypeptide reads, in one-letter code: ATP synthase subunit a (273 aa).

7 helical membrane passes run 41 to 61 (ILNIDSIFFTLLLGIIFLLIF), 101 to 121 (LIAPLALTIFIWIFLMNLMDL), 122 to 142 (LAVDMLPYIAMYILHIPALRV), 143 to 163 (VPSADINITLSLALGVFILII), 183 to 203 (PFNHLIFIPLNFILESVSLLS), 221 to 241 (LVFILIAGLLPWWSQWIISVP), and 247 to 267 (IIVITLQAFIFMVLTVVYIAM).

Belongs to the ATPase A chain family. In terms of assembly, F-type ATPases have 2 components, CF(1) - the catalytic core - and CF(0) - the membrane proton channel. CF(1) has five subunits: alpha(3), beta(3), gamma(1), delta(1), epsilon(1). CF(0) has three main subunits: a(1), b(2) and c(9-12). The alpha and beta chains form an alternating ring which encloses part of the gamma chain. CF(1) is attached to CF(0) by a central stalk formed by the gamma and epsilon chains, while a peripheral stalk is formed by the delta and b chains.

The protein localises to the cell membrane. Its function is as follows. Key component of the proton channel; it plays a direct role in the translocation of protons across the membrane. This chain is ATP synthase subunit a, found in Baumannia cicadellinicola subsp. Homalodisca coagulata.